We begin with the raw amino-acid sequence, 223 residues long: Endonuclease V (223 aa).

Mg(2+)-binding residues include Asp35 and Asp103.

This sequence belongs to the endonuclease V family. Mg(2+) serves as cofactor.

It is found in the cytoplasm. It carries out the reaction Endonucleolytic cleavage at apurinic or apyrimidinic sites to products with a 5'-phosphate.. Its function is as follows. DNA repair enzyme involved in the repair of deaminated bases. Selectively cleaves double-stranded DNA at the second phosphodiester bond 3' to a deoxyinosine leaving behind the intact lesion on the nicked DNA. The chain is Endonuclease V from Escherichia coli O139:H28 (strain E24377A / ETEC).